A 149-amino-acid chain; its full sequence is 3-hydroxyacyl-[acyl-carrier-protein] dehydratase FabZ (149 aa).

His52 is an active-site residue.

It belongs to the thioester dehydratase family. FabZ subfamily.

It localises to the cytoplasm. The enzyme catalyses a (3R)-hydroxyacyl-[ACP] = a (2E)-enoyl-[ACP] + H2O. Involved in unsaturated fatty acids biosynthesis. Catalyzes the dehydration of short chain beta-hydroxyacyl-ACPs and long chain saturated and unsaturated beta-hydroxyacyl-ACPs. This Cupriavidus necator (strain ATCC 17699 / DSM 428 / KCTC 22496 / NCIMB 10442 / H16 / Stanier 337) (Ralstonia eutropha) protein is 3-hydroxyacyl-[acyl-carrier-protein] dehydratase FabZ.